The chain runs to 317 residues: Acetyl-coenzyme A carboxylase carboxyl transferase subunit alpha (317 aa).

The CoA carboxyltransferase C-terminal domain maps to 31–292 (RFEPELAQLE…DKALWATLTS (262 aa)).

Belongs to the AccA family. Acetyl-CoA carboxylase is a heterohexamer composed of biotin carboxyl carrier protein (AccB), biotin carboxylase (AccC) and two subunits each of ACCase subunit alpha (AccA) and ACCase subunit beta (AccD).

Its subcellular location is the cytoplasm. The enzyme catalyses N(6)-carboxybiotinyl-L-lysyl-[protein] + acetyl-CoA = N(6)-biotinyl-L-lysyl-[protein] + malonyl-CoA. It participates in lipid metabolism; malonyl-CoA biosynthesis; malonyl-CoA from acetyl-CoA: step 1/1. Its function is as follows. Component of the acetyl coenzyme A carboxylase (ACC) complex. First, biotin carboxylase catalyzes the carboxylation of biotin on its carrier protein (BCCP) and then the CO(2) group is transferred by the carboxyltransferase to acetyl-CoA to form malonyl-CoA. This is Acetyl-coenzyme A carboxylase carboxyl transferase subunit alpha from Sorangium cellulosum (strain So ce56) (Polyangium cellulosum (strain So ce56)).